A 463-amino-acid polypeptide reads, in one-letter code: ATP synthase subunit beta (463 aa).

151–158 (GGAGVGKT) contributes to the ATP binding site.

It belongs to the ATPase alpha/beta chains family. In terms of assembly, F-type ATPases have 2 components, CF(1) - the catalytic core - and CF(0) - the membrane proton channel. CF(1) has five subunits: alpha(3), beta(3), gamma(1), delta(1), epsilon(1). CF(0) has three main subunits: a(1), b(2) and c(9-12). The alpha and beta chains form an alternating ring which encloses part of the gamma chain. CF(1) is attached to CF(0) by a central stalk formed by the gamma and epsilon chains, while a peripheral stalk is formed by the delta and b chains.

Its subcellular location is the cell membrane. The catalysed reaction is ATP + H2O + 4 H(+)(in) = ADP + phosphate + 5 H(+)(out). Its function is as follows. Produces ATP from ADP in the presence of a proton gradient across the membrane. The catalytic sites are hosted primarily by the beta subunits. This is ATP synthase subunit beta from Clostridium botulinum (strain Okra / Type B1).